The primary structure comprises 59 residues: Large ribosomal subunit protein eL37 (59 aa).

The Zn(2+) site is built by Cys20, Cys23, Cys35, and Cys38. The segment at 20–38 adopts a C4-type zinc-finger fold; that stretch reads CRRCGRHSFHRRKGYCAAC.

The protein belongs to the eukaryotic ribosomal protein eL37 family. Zn(2+) serves as cofactor.

In terms of biological role, binds to the 23S rRNA. The sequence is that of Large ribosomal subunit protein eL37 (rpl37e) from Archaeoglobus fulgidus (strain ATCC 49558 / DSM 4304 / JCM 9628 / NBRC 100126 / VC-16).